The following is an 83-amino-acid chain: Defensin-2 (83 aa).

The signal sequence occupies residues 1-33 (MAGKGVGTPLSALFLLVLLVVTIGMMEVQVAEG). Cystine bridges form between Cys-36–Cys-82, Cys-47–Cys-67, Cys-53–Cys-76, and Cys-57–Cys-78.

The protein belongs to the DEFL family.

Its subcellular location is the secreted. In terms of biological role, plant defense peptide. Has antifungal activity. The chain is Defensin-2 from Pinus sylvestris (Scotch pine).